A 202-amino-acid chain; its full sequence is uncharacterized protein (202 aa).

This is an uncharacterized protein from Treponema pallidum (strain Nichols).